A 532-amino-acid chain; its full sequence is Neutral amino acid transporter A (532 aa).

Residue methionine 1 is modified to N-acetylmethionine. The segment at 1–29 (MEKSGETNGYLDGTQAEPAAGPRTPETAM) is disordered. Residues 1–41 (MEKSGETNGYLDGTQAEPAAGPRTPETAMGKSQRCASFFRR) lie on the Cytoplasmic side of the membrane. The next 3 membrane-spanning stretches (helical) occupy residues 42–62 (HALV…GAAL), 88–108 (MIIL…LDAS), and 119–139 (AYFG…AFII). The Extracellular portion of the chain corresponds to 140–216 (KPGAGAQTLQ…VTKEKIPVVT (77 aa)). Asparagine 201 and asparagine 206 each carry an N-linked (GlcNAc...) asparagine glycan. 6 helical membrane passes run 217–237 (DVEG…GVAL), 257–277 (ATMV…MFLI), 298–318 (IFAS…LVYF), 328–348 (FLLG…SSAT), 373–393 (IGAT…AVFI), and 418–438 (VGAA…LEAI). Residues 495-532 (EAIPNSKSEEETSPLVTHQNPAGPVAIAPELESKESVL) form a disordered region. Phosphoserine is present on residues serine 507, serine 527, and serine 530.

The protein belongs to the dicarboxylate/amino acid:cation symporter (DAACS) (TC 2.A.23) family. SLC1A4 subfamily.

The protein resides in the membrane. It localises to the melanosome. It carries out the reaction L-threonine(in) + Na(+)(in) = L-threonine(out) + Na(+)(out). It catalyses the reaction L-serine(in) + Na(+)(in) = L-serine(out) + Na(+)(out). The enzyme catalyses L-cysteine(in) + Na(+)(in) = L-cysteine(out) + Na(+)(out). The catalysed reaction is L-alanine(in) + Na(+)(in) = L-alanine(out) + Na(+)(out). It carries out the reaction L-proline(in) + Na(+)(in) = L-proline(out) + Na(+)(out). It catalyses the reaction 4-hydroxy-L-proline(in) + Na(+)(in) = 4-hydroxy-L-proline(out) + Na(+)(out). Functionally, sodium-dependent neutral amino-acid transporter that mediates transport of alanine, serine, cysteine, proline, hydroxyproline and threonine. This is Neutral amino acid transporter A (Slc1a4) from Mus musculus (Mouse).